Consider the following 118-residue polypeptide: SPbeta prophage-derived uncharacterized protein YomS (118 aa).

The chain is SPbeta prophage-derived uncharacterized protein YomS (yomS) from Bacillus subtilis (strain 168).